A 549-amino-acid chain; its full sequence is Membrane protein insertase YidC (549 aa).

Residues 8-28 traverse the membrane as a helical segment; that stretch reads VLLATVLSVAVLIVWQFVFPS. Residues 29 to 39 show a composition bias toward pro residues; that stretch reads PKPKPQPPKPP. The segment at 29–68 is disordered; it reads PKPKPQPPKPPEAAQRAEAPAAPAPGQPAAQAPAPAVPQD. Composition is skewed to low complexity over residues 40-49 and 55-68; these read EAAQRAEAPA and QPAAQAPAPAVPQD. 4 helical membrane-spanning segments follow: residues 328-348, 354-374, 424-444, and 502-522; these read IDYGAMARPFAFFARLLLFVM, LVANWGLAIILLTVLVKVLLY, LGGCLPMLIQLPIWFALYATL, and PGFFTLLMLSVPAGLTLYIFV.

This sequence belongs to the OXA1/ALB3/YidC family. Type 1 subfamily. Interacts with the Sec translocase complex via SecD. Specifically interacts with transmembrane segments of nascent integral membrane proteins during membrane integration.

The protein resides in the cell inner membrane. Its function is as follows. Required for the insertion and/or proper folding and/or complex formation of integral membrane proteins into the membrane. Involved in integration of membrane proteins that insert both dependently and independently of the Sec translocase complex, as well as at least some lipoproteins. Aids folding of multispanning membrane proteins. The protein is Membrane protein insertase YidC of Anaeromyxobacter sp. (strain Fw109-5).